The following is a 180-amino-acid chain: Large ribosomal subunit protein uL6 (180 aa).

A disordered region spans residues 158–180 (YSGKGISYKGEKIRRKEGKTASK).

It belongs to the universal ribosomal protein uL6 family. As to quaternary structure, part of the 50S ribosomal subunit.

Functionally, this protein binds to the 23S rRNA, and is important in its secondary structure. It is located near the subunit interface in the base of the L7/L12 stalk, and near the tRNA binding site of the peptidyltransferase center. The chain is Large ribosomal subunit protein uL6 from Mycoplasmopsis synoviae (strain 53) (Mycoplasma synoviae).